The chain runs to 328 residues: MPERNPVAPPALPWLAIAGPTASGKTGAALAIARHWRQRGGPPVEIISVDSALVYRGMDIGTAKPSAAERAEVPHHLIDLIEPTAAYSAAEFAADAARLIGEIHGRGALPLLVGGTMLYFKVWLDGIDPLPTADAGVRAQIDQRARELGWPALHAELARVDPITAARLAPADAQRIQRALEVWQISGQPLSSLHTGRSASSAWAHSGLMLSLEPTSRAWLHQRIGERFEAMLAAGLIDEVEHLRARGDLHPDLPSMRCVGYRQTWEMLDGLWPSAELLERCSAATRQLAKRQLTWLRGMPRRQVLACDEPGLVERVLSRADAWQADAR.

19–26 (GPTASGKT) is an ATP binding site. 21–26 (TASGKT) is a substrate binding site. Interaction with substrate tRNA regions lie at residues 50-53 (DSAL), 174-178 (QRIQR), and 257-262 (RCVGYR).

It belongs to the IPP transferase family. As to quaternary structure, monomer. Mg(2+) serves as cofactor.

It catalyses the reaction adenosine(37) in tRNA + dimethylallyl diphosphate = N(6)-dimethylallyladenosine(37) in tRNA + diphosphate. In terms of biological role, catalyzes the transfer of a dimethylallyl group onto the adenine at position 37 in tRNAs that read codons beginning with uridine, leading to the formation of N6-(dimethylallyl)adenosine (i(6)A). The sequence is that of tRNA dimethylallyltransferase from Leptothrix cholodnii (strain ATCC 51168 / LMG 8142 / SP-6) (Leptothrix discophora (strain SP-6)).